Consider the following 242-residue polypeptide: MTITSWLAASRHTVVLTGAGMSTESGLPDFRSPRTGLWARFNPSELATIDALYHRRESFVEFYQYRIRTLQQCQPHDGHRLLADWERRGIVQTIVTQNVDGFHQEAGSRRVIELHGSLRTVHCQRCGESKPSFVYLHGVLTCECGGVLRPSVVLFGEPLPEKAITEAWEAAQQADLFLVLGSSLQVSPANQLPLVAKRNGAKLVIINWEPTELDDLADAVIHQRKIGEVLNELNEQLAEVDP.

In terms of domain architecture, Deacetylase sirtuin-type spans M1–P242. Residues A19, T23, F30, R31, Q97, V99, D100, and H115 each coordinate NAD(+). F30 provides a ligand contact to nicotinamide. Nicotinamide contacts are provided by V99 and D100. Catalysis depends on H115, which acts as the Proton acceptor. Zn(2+) contacts are provided by C123, C126, C142, and C144. NAD(+) is bound by residues S182, S183, N207, and I226.

It belongs to the sirtuin family. Class U subfamily. Zn(2+) is required as a cofactor.

Its subcellular location is the cytoplasm. The enzyme catalyses N(6)-acetyl-L-lysyl-[protein] + NAD(+) + H2O = 2''-O-acetyl-ADP-D-ribose + nicotinamide + L-lysyl-[protein]. Functionally, NAD-dependent protein deacetylase which modulates the activities of several enzymes which are inactive in their acetylated form. This chain is NAD-dependent protein deacetylase 1, found in Geobacillus kaustophilus (strain HTA426).